The primary structure comprises 303 residues: N-acetyl-D-glucosamine kinase (303 aa).

ATP contacts are provided by residues 4-11 and 133-140; these read GFDIGGTK and GVGGGLVL. Zn(2+) contacts are provided by His157, Cys177, Cys179, and Cys184.

It belongs to the ROK (NagC/XylR) family. NagK subfamily.

The catalysed reaction is N-acetyl-D-glucosamine + ATP = N-acetyl-D-glucosamine 6-phosphate + ADP + H(+). The protein operates within cell wall biogenesis; peptidoglycan recycling. Its function is as follows. Catalyzes the phosphorylation of N-acetyl-D-glucosamine (GlcNAc) derived from cell-wall degradation, yielding GlcNAc-6-P. The chain is N-acetyl-D-glucosamine kinase from Salmonella gallinarum (strain 287/91 / NCTC 13346).